The primary structure comprises 524 residues: Acetyl-CoA hydrolase (524 aa).

275-279 serves as a coordination point for CoA; that stretch reads GIGNI. Glu-300 functions as the 5-glutamyl coenzyme A thioester intermediate in the catalytic mechanism. CoA is bound by residues Asn-390 and Gly-394.

This sequence belongs to the acetyl-CoA hydrolase/transferase family.

The protein localises to the cytoplasm. The catalysed reaction is acetyl-CoA + H2O = acetate + CoA + H(+). Presumably involved in regulating the intracellular acetyl-CoA pool for fatty acid and cholesterol synthesis and fatty acid oxidation. The chain is Acetyl-CoA hydrolase (ACH1) from Candida albicans (strain SC5314 / ATCC MYA-2876) (Yeast).